We begin with the raw amino-acid sequence, 308 residues long: Ribosomal RNA large subunit methyltransferase F (308 aa).

It belongs to the methyltransferase superfamily. METTL16/RlmF family.

It is found in the cytoplasm. The enzyme catalyses adenosine(1618) in 23S rRNA + S-adenosyl-L-methionine = N(6)-methyladenosine(1618) in 23S rRNA + S-adenosyl-L-homocysteine + H(+). Specifically methylates the adenine in position 1618 of 23S rRNA. The sequence is that of Ribosomal RNA large subunit methyltransferase F from Salmonella heidelberg (strain SL476).